The primary structure comprises 561 residues: Malto-oligosyltrehalose trehalohydrolase (561 aa).

Residue 253–258 coordinates substrate; that stretch reads RLDAVH. Asp-255 functions as the Nucleophile in the catalytic mechanism. Glu-286 serves as the catalytic Proton donor. Substrate is bound by residues 311 to 315 and 379 to 384; these read DDFHH and HDQVGN.

This sequence belongs to the glycosyl hydrolase 13 family. As to quaternary structure, homodimer.

It is found in the cytoplasm. It carries out the reaction hydrolysis of (1-&gt;4)-alpha-D-glucosidic linkage in 4-alpha-D-[(1-&gt;4)-alpha-D-glucanosyl]n trehalose to yield trehalose and (1-&gt;4)-alpha-D-glucan.. Its pathway is glycan biosynthesis; trehalose biosynthesis. The polypeptide is Malto-oligosyltrehalose trehalohydrolase (treZ) (Saccharolobus solfataricus (strain ATCC 35092 / DSM 1617 / JCM 11322 / P2) (Sulfolobus solfataricus)).